Consider the following 389-residue polypeptide: Cytochrome f (389 aa).

The first 42 residues, 1-42 (MTTFFISKVNGPVNKSLIWLKIHIYEFFLLKFMLLFPPTVCS), serve as a signal peptide directing secretion. Heme is bound by residues Y105, C125, C128, and H129. A helical transmembrane segment spans residues 355–375 (LQALIVFFIFVILTQLFLVLK).

This sequence belongs to the cytochrome f family. As to quaternary structure, the 4 large subunits of the cytochrome b6-f complex are cytochrome b6, subunit IV (17 kDa polypeptide, petD), cytochrome f and the Rieske protein, while the 4 small subunits are PetG, PetL, PetM and PetN. The complex functions as a dimer. Heme is required as a cofactor.

It localises to the plastid. The protein localises to the chloroplast thylakoid membrane. In terms of biological role, component of the cytochrome b6-f complex, which mediates electron transfer between photosystem II (PSII) and photosystem I (PSI), cyclic electron flow around PSI, and state transitions. This is Cytochrome f from Pleurastrum terricola (Filamentous green alga).